Here is an 860-residue protein sequence, read N- to C-terminus: DNA mismatch repair protein MutS (860 aa).

Residue 607-614 participates in ATP binding; sequence GPNMSGKS.

It belongs to the DNA mismatch repair MutS family.

In terms of biological role, this protein is involved in the repair of mismatches in DNA. It is possible that it carries out the mismatch recognition step. This protein has a weak ATPase activity. This chain is DNA mismatch repair protein MutS, found in Listeria monocytogenes serotype 4b (strain CLIP80459).